A 403-amino-acid polypeptide reads, in one-letter code: Exodeoxyribonuclease 7 large subunit (403 aa).

This sequence belongs to the XseA family. Heterooligomer composed of large and small subunits.

The protein localises to the cytoplasm. It catalyses the reaction Exonucleolytic cleavage in either 5'- to 3'- or 3'- to 5'-direction to yield nucleoside 5'-phosphates.. Bidirectionally degrades single-stranded DNA into large acid-insoluble oligonucleotides, which are then degraded further into small acid-soluble oligonucleotides. This is Exodeoxyribonuclease 7 large subunit from Clostridium botulinum (strain Okra / Type B1).